The primary structure comprises 388 residues: Pepsin A-4 (388 aa).

The N-terminal stretch at 1–15 (MKWLLLLGLVALSEC) is a signal peptide. A propeptide spans 16–62 (IMYKVPLIRKKSLRRTLSERGLLKDFLKKHNLNPARKYFPQWEAPTL) (activation peptide). Residues 76–385 (YFGTIGIGTP…DRANNQVGLA (310 aa)) enclose the Peptidase A1 domain. Aspartate 94 is a catalytic residue. A disulfide bridge links cysteine 107 with cysteine 112. Position 130 is a phosphoserine (serine 130). Residues cysteine 268 and cysteine 272 are joined by a disulfide bond. The active site involves aspartate 277. Cysteine 311 and cysteine 344 are joined by a disulfide.

The protein belongs to the peptidase A1 family.

The protein resides in the secreted. It catalyses the reaction Preferential cleavage: hydrophobic, preferably aromatic, residues in P1 and P1' positions. Cleaves 1-Phe-|-Val-2, 4-Gln-|-His-5, 13-Glu-|-Ala-14, 14-Ala-|-Leu-15, 15-Leu-|-Tyr-16, 16-Tyr-|-Leu-17, 23-Gly-|-Phe-24, 24-Phe-|-Phe-25 and 25-Phe-|-Tyr-26 bonds in the B chain of insulin.. Shows particularly broad specificity; although bonds involving phenylalanine and leucine are preferred, many others are also cleaved to some extent. This is Pepsin A-4 (PGA4) from Homo sapiens (Human).